We begin with the raw amino-acid sequence, 155 residues long: Protein U1 (155 aa).

It belongs to the nanovirus U1 protein family.

The protein is Protein U1 (DNA-U1) of Cicer arietinum (Chickpea).